Reading from the N-terminus, the 35-residue chain is U1-segestritoxin-Sf1a (35 aa).

Disulfide bonds link Cys-10/Cys-22 and Cys-17/Cys-28. The keys region for toxin activity stretch occupies residues 31–33; sequence DPW.

Belongs to the neurotoxin 16 (SFI) family. In terms of tissue distribution, expressed by the venom gland.

The protein resides in the secreted. Functionally, insecticidal toxin. This is U1-segestritoxin-Sf1a from Segestria florentina (Tube-web spider).